We begin with the raw amino-acid sequence, 536 residues long: Nucleosome assembly protein 1-like 3 (536 aa).

Disordered regions lie at residues 1-104 (MAEA…DKLP) and 160-338 (PTEE…KEDP). Positions 35-75 (SNSSSSTTSCGSTGSSSSSSSSSSSSSSSSSGSSGSSSNGS) are enriched in low complexity. Residues 77–95 (LHQKKRVPGPSRRAQRRPS) are compositionally biased toward basic residues. Over residues 160–184 (PTEEECEWNSEEEFSGDEEMQDDTP) the composition is skewed to acidic residues. Basic and acidic residues-rich tracts occupy residues 199-220 (GKEN…PEAK) and 227-269 (PKET…KTDS). Residues 287–300 (TQANAEYTDQPTED) show a composition bias toward polar residues. The span at 306-324 (PVREAQKRVPETRPEERVN) shows a compositional bias: basic and acidic residues.

The protein belongs to the nucleosome assembly protein (NAP) family.

It localises to the nucleus. The polypeptide is Nucleosome assembly protein 1-like 3 (Nap1l3) (Rattus norvegicus (Rat)).